The primary structure comprises 55 residues: Large ribosomal subunit protein bL33 (55 aa).

Over residues 1-11 (MAKGARDKIKL) the composition is skewed to basic and acidic residues. Residues 1-24 (MAKGARDKIKLESTAGTGHFYTTT) are disordered. Residues 14 to 24 (TAGTGHFYTTT) show a composition bias toward polar residues.

It belongs to the bacterial ribosomal protein bL33 family.

This is Large ribosomal subunit protein bL33 from Burkholderia multivorans (strain ATCC 17616 / 249).